We begin with the raw amino-acid sequence, 1168 residues long: MLRMKLPPKSTHPSEPPPDAEEPEADARPGAKAPPRRRRDCRPPPPPPTGLPRGPPPPPPSPPRGLEPPVASGPTAGAGMPGGGGHAAALREQERVYEWFGLVLGSAQRLEFLCGLLDLCNPLELRFLGSCLEDLARKDYHYLRDSEAKANGLSDPGSLADFREPAVRSRLIVYLALLGSENREAAGRLHRLLPQVDAVLRSLRATRVEGSRGSVEDEPGGDDEQDAEKDGPGPEGGGCAKLGTGGGLGFRAQEELLLLFTMASLHPAFSFHQRVTLREHLERLRSALRVEPEDAEVEPSNFAGSRAQNDSACGDYIQSNETGLVEQAQIPQDGLTVAPHRAQREAVHIEKIMLKGVQRRRADKYWEYTFKVNWSDLSVTTVTKTHQELQEFLLKLPKEFSSESFDKTILKALNQGSLRREERRHPDLEPILRQLFSTSPQAFLQSHKVRSFFRSISSESQHSFNNLQSSLKTSKILEHLKEDSSEASSQEEDVLQHTIIHKKHAGKSPAGNVATSCALLEGLTMQYAEQNGVVDWRNQGCAAIQHSEHCVSSADQLSAEKRSLSSVNKKKGKPQVEKEKIKKTENRLSSRINGIRLSAPQHAHGSTVKDMNLDVGSGHDTCGETSSESYSSPSSPRHDGRESLESEEEKDRDTDSNSEDSGNPSSARFAGHGSVTQTVSVQPPADTVSLGTENGNLLEAPLTSHKYPHIPFMPTLPCVMHNGAQKSEVVIPSPKSADGKAVGVLVPNPVAISTMMESTNAAPVGILGPAASGESEKHLELLASPLPIPSPFLPHSSAPALQLTLQSLKLQPPQGASENCPVNIPQQAATRLSIGSPNTALIPVHNPGAFPGSPVAATDPITKSASQVVGLNQMVPQIEGNTGTVPQPNNVKVVLPAAGLSAAQPPASYTFPGSPLAASVLPTQNSTVLNTATSAQPASTGISPAQSTVPPAVPTHTPGPAPSPSPALTHSTAQSDSTSYISAVGNTNANSTIVPPQPLGPCGSCGRRCSCGTNGNLQLNSYYYPNPMPGPMYRLPSFFTLPSICNGSYLNQAHQSNGNQLPFFLPQTPYANGLVHDPVMGSQASYGMQQMAGFGRLYPVYPAPNVVANTSGSGPKKNGSVSCYNCGVSGHYAQDCKQSSMEANQQGTYRLRYAPPLPPSNDTLDSAD.

4 disordered regions span residues 1 to 87 (MLRM…GGHA), 209 to 242 (EGSRGSVEDEPGGDDEQDAEKDGPGPEGGGCAKL), 561 to 693 (KRSL…LGTE), and 932 to 978 (ATSA…SDST). The span at 43-66 (PPPPPPTGLPRGPPPPPPSPPRGL) shows a compositional bias: pro residues. Positions 67–78 (EPPVASGPTAGA) are enriched in low complexity. Residues 216-227 (EDEPGGDDEQDA) show a composition bias toward acidic residues. The segment covering 233-242 (GPEGGGCAKL) has biased composition (gly residues). Residues 574–588 (PQVEKEKIKKTENRL) show a composition bias toward basic and acidic residues. A compositionally biased stretch (low complexity) spans 626–635 (SSESYSSPSS). The span at 636-655 (PRHDGRESLESEEEKDRDTD) shows a compositional bias: basic and acidic residues. A compositionally biased stretch (polar residues) spans 932–949 (ATSAQPASTGISPAQSTV). Residues 951 to 965 (PAVPTHTPGPAPSPS) show a composition bias toward pro residues. The segment covering 966 to 978 (PALTHSTAQSDST) has biased composition (polar residues). The CCHC-type zinc finger occupies 1121 to 1138 (VSCYNCGVSGHYAQDCKQ).

The protein is Zinc finger CCHC domain-containing protein 2 (Zcchc2) of Rattus norvegicus (Rat).